We begin with the raw amino-acid sequence, 273 residues long: Ribosomal RNA small subunit methyltransferase A (273 aa).

S-adenosyl-L-methionine is bound by residues N18, L20, G45, E66, D91, and N113.

The protein belongs to the class I-like SAM-binding methyltransferase superfamily. rRNA adenine N(6)-methyltransferase family. RsmA subfamily.

The protein resides in the cytoplasm. The enzyme catalyses adenosine(1518)/adenosine(1519) in 16S rRNA + 4 S-adenosyl-L-methionine = N(6)-dimethyladenosine(1518)/N(6)-dimethyladenosine(1519) in 16S rRNA + 4 S-adenosyl-L-homocysteine + 4 H(+). Functionally, specifically dimethylates two adjacent adenosines (A1518 and A1519) in the loop of a conserved hairpin near the 3'-end of 16S rRNA in the 30S particle. May play a critical role in biogenesis of 30S subunits. In Shigella dysenteriae serotype 1 (strain Sd197), this protein is Ribosomal RNA small subunit methyltransferase A.